Consider the following 162-residue polypeptide: UPF0260 protein Caul_3920 (162 aa).

Belongs to the UPF0260 family.

The chain is UPF0260 protein Caul_3920 from Caulobacter sp. (strain K31).